The chain runs to 341 residues: Cell division protein FtsX (341 aa).

The tract at residues 1 to 34 is disordered; sequence MSTTRTPKVSERVAPKPADPQPAKKKRGEDDDGP. Residues 1 to 65 are Cytoplasmic-facing; that stretch reads MSTTRTPKVS…RRLGKQPIGS (65 aa). A helical transmembrane segment spans residues 66–86; that stretch reads FFTCLVMAVALSMPMGLSLLL. At 87–212 the chain is on the periplasmic side; sequence KNIEQLGGSW…LAAILKLGDR (126 aa). The chain crosses the membrane as a helical span at residues 213–233; sequence FVFGLAVMLISALLLVIGNTI. The Cytoplasmic segment spans residues 234-263; it reads RLHIENRRIEIEVIKLVGGTDAYVRRPFLY. The helical transmembrane segment at 264 to 284 threads the bilayer; it reads MGALYGLGAGLLAWGILAFGL. The Periplasmic portion of the chain corresponds to 285-311; sequence NWLNEAVVGLSGLYGSDFALGGVPASD. A helical transmembrane segment spans residues 312–332; the sequence is GLSLLIGAVLLGYIGAWIAVA. Topologically, residues 333–341 are cytoplasmic; it reads RHLNELAPR.

The protein belongs to the ABC-4 integral membrane protein family. FtsX subfamily. Forms a membrane-associated complex with FtsE.

The protein resides in the cell inner membrane. In terms of biological role, part of the ABC transporter FtsEX involved in cellular division. The protein is Cell division protein FtsX of Pseudomonas putida (Arthrobacter siderocapsulatus).